Consider the following 908-residue polypeptide: Disease resistance protein RPP8 (908 aa).

The stretch at 15–57 (DLLSRESERLQGIDGQLDGLKRQLRSLQSLLKDADAKKHGSDR) forms a coiled coil. One can recognise an NB-ARC domain in the interval 146–459 (RQRVQREIRQ…AEGIYDGSTI (314 aa)). ATP is bound at residue 192 to 199 (GMGGIGKT). LRR repeat units lie at residues 575 to 600 (LTLL…IGGL), 601 to 623 (IHLR…MRNL), 648 to 673 (MIQL…DLVN), 693 to 718 (MTKL…SLRE), 722 to 746 (LETL…VLDH), 748 to 770 (IHLK…QFPP), 793 to 820 (LLHL…GFPQ), 842 to 867 (MPCL…KYIT), and 882 to 905 (KEKL…QFIN).

It belongs to the disease resistance NB-LRR family. RPP8/HRT subfamily. As to quaternary structure, interacts with the NAC protein TIP. Interacts with MORC1/CRT1. Interacts with COP1 and is subsequently degraded in a 26s proteasome dependent manner. As to expression, mostly expressed in leaves, and, to a lower extent, in roots.

It is found in the cell membrane. Functionally, disease resistance protein. Resistance proteins guard the plant against pathogens that contain an appropriate avirulence protein via an indirect interaction with this avirulence protein. That triggers a defense system including the hypersensitive response, which restricts the pathogen growth. The interaction with TIP (TCV-interacting protein) may be essential for the recognition of the avirulence proteins, and the triggering of the defense response. Triggers resistance to turnip crinkle virus (TCV) via a SAG101-dependent pathway. This Arabidopsis thaliana (Mouse-ear cress) protein is Disease resistance protein RPP8 (RPP8).